We begin with the raw amino-acid sequence, 348 residues long: L-threonine 3-dehydrogenase (348 aa).

C42 lines the Zn(2+) pocket. Catalysis depends on charge relay system residues T44 and H47. Positions 67, 68, 97, 100, 103, and 111 each coordinate Zn(2+). Residues L179, E199, R204, 266–268 (LGL), and 291–292 (IT) contribute to the NAD(+) site.

Belongs to the zinc-containing alcohol dehydrogenase family. Homodimer. Homotetramer; dimer of dimers. It depends on Zn(2+) as a cofactor.

The protein localises to the cytoplasm. The catalysed reaction is L-threonine + NAD(+) = (2S)-2-amino-3-oxobutanoate + NADH + H(+). Its pathway is amino-acid degradation; L-threonine degradation via oxydo-reductase pathway; glycine from L-threonine: step 1/2. Is totally inhibited by EDTA in vitro. Its function is as follows. Catalyzes the NAD(+)-dependent oxidation of L-threonine to 2-amino-3-ketobutyrate. Is much less efficient when using NADP(+) instead of NAD(+). To a lesser extent, also catalyzes the oxidation of L-serine and DL-threo-3-phenylserine, but not that of L-allo-threonine, D-threonine and D-allo-threonine and many other L-amino acids. The protein is L-threonine 3-dehydrogenase of Pyrococcus horikoshii (strain ATCC 700860 / DSM 12428 / JCM 9974 / NBRC 100139 / OT-3).